A 444-amino-acid chain; its full sequence is Signal recognition particle 54 kDa protein (444 aa).

GTP contacts are provided by residues 106–113 (GLQGSGKT), 187–191 (DTAGR), and 245–248 (SKLD).

The protein belongs to the GTP-binding SRP family. SRP54 subfamily. In terms of assembly, part of the signal recognition particle protein translocation system, which is composed of SRP and FtsY. Archaeal SRP consists of a 7S RNA molecule of 300 nucleotides and two protein subunits: SRP54 and SRP19.

Its subcellular location is the cytoplasm. The enzyme catalyses GTP + H2O = GDP + phosphate + H(+). In terms of biological role, involved in targeting and insertion of nascent membrane proteins into the cytoplasmic membrane. Binds to the hydrophobic signal sequence of the ribosome-nascent chain (RNC) as it emerges from the ribosomes. The SRP-RNC complex is then targeted to the cytoplasmic membrane where it interacts with the SRP receptor FtsY. This Methanosphaera stadtmanae (strain ATCC 43021 / DSM 3091 / JCM 11832 / MCB-3) protein is Signal recognition particle 54 kDa protein.